A 528-amino-acid polypeptide reads, in one-letter code: Inositol-3-phosphate synthase (528 aa).

The NAD(+) site is built by Gly66, Gly67, Asn68, Asn69, Asp140, Gln187, Arg190, Thr228, Ala229, Asn230, Thr231, Gly279, Asp304, Ser307, Asn338, Asn339, Asp340, Lys353, Gly392, Asp393, Asp421, and Ser422.

Belongs to the myo-inositol 1-phosphate synthase family. It depends on NAD(+) as a cofactor.

The protein localises to the cytoplasm. It is found in the cytosol. It carries out the reaction D-glucose 6-phosphate = 1D-myo-inositol 3-phosphate. The protein operates within polyol metabolism; myo-inositol biosynthesis; myo-inositol from D-glucose 6-phosphate: step 1/2. Its activity is regulated as follows. Activated by ammonium ions. Key enzyme in myo-inositol biosynthesis pathway that catalyzes the conversion of glucose 6-phosphate to 1-myo-inositol 1-phosphate in a NAD-dependent manner. Rate-limiting enzyme in the synthesis of all inositol-containing compounds. De novo-synthesized myo-inositol is essential for incorporation into GPI (glycosylphosphatidylinositol) glycolipids in the bloodstream form. In Trypanosoma brucei brucei, this protein is Inositol-3-phosphate synthase.